A 506-amino-acid chain; its full sequence is ATP synthase subunit alpha, plastid (506 aa).

170–177 (GDRQTGKT) lines the ATP pocket.

Belongs to the ATPase alpha/beta chains family. As to quaternary structure, F-type ATPases have 2 components, CF(1) - the catalytic core - and CF(0) - the membrane proton channel. CF(1) has five subunits: alpha(3), beta(3), gamma(1), delta(1), epsilon(1). CF(0) has four main subunits: a, b, b' and c.

The protein localises to the plastid membrane. It carries out the reaction ATP + H2O + 4 H(+)(in) = ADP + phosphate + 5 H(+)(out). Produces ATP from ADP in the presence of a proton gradient across the membrane. The alpha chain is a regulatory subunit. In Prototheca wickerhamii, this protein is ATP synthase subunit alpha, plastid.